Reading from the N-terminus, the 285-residue chain is 1,4-dihydroxy-2-naphthoyl-CoA synthase (285 aa).

Residues Arg-45, Ser-84–Lys-89, Tyr-97, Tyr-129–Gly-133, Thr-155, Ser-161, Tyr-258, and Lys-273 contribute to the substrate site. Position 154–156 (Gln-154–Gly-156) interacts with hydrogencarbonate.

This sequence belongs to the enoyl-CoA hydratase/isomerase family. MenB subfamily. As to quaternary structure, homohexamer. Dimer of a homotrimer. Hydrogencarbonate serves as cofactor.

It catalyses the reaction 2-succinylbenzoyl-CoA + H(+) = 1,4-dihydroxy-2-naphthoyl-CoA + H2O. Its pathway is quinol/quinone metabolism; 1,4-dihydroxy-2-naphthoate biosynthesis; 1,4-dihydroxy-2-naphthoate from chorismate: step 6/7. The protein operates within quinol/quinone metabolism; menaquinone biosynthesis. Its activity is regulated as follows. Inhibited by sulfite and nitrate. Its function is as follows. Converts o-succinylbenzoyl-CoA (OSB-CoA) to 1,4-dihydroxy-2-naphthoyl-CoA (DHNA-CoA). This chain is 1,4-dihydroxy-2-naphthoyl-CoA synthase, found in Escherichia coli (strain K12).